The chain runs to 328 residues: Mannitol-1-phosphate 5-dehydrogenase (328 aa).

Position 3 to 14 (3 to 14 (LIHFGAGNIGCG)) interacts with NAD(+).

It belongs to the mannitol dehydrogenase family.

The catalysed reaction is D-mannitol 1-phosphate + NAD(+) = beta-D-fructose 6-phosphate + NADH + H(+). The polypeptide is Mannitol-1-phosphate 5-dehydrogenase (mtlD) (Mycoplasma mycoides subsp. mycoides SC (strain CCUG 32753 / NCTC 10114 / PG1)).